Reading from the N-terminus, the 1507-residue chain is Transient receptor potential cation channel subfamily M member 2 (1507 aa).

Residues 1–11 show a composition bias toward basic and acidic residues; that stretch reads MEPLDQRRTDS. Residues 1-24 form a disordered region; it reads MEPLDQRRTDSDQEEGFGVQSRRA. Residues 1–751 lie on the Cytoplasmic side of the membrane; sequence MEPLDQRRTD…WWGQLCVDNG (751 aa). Threonine 173, asparagine 178, arginine 301, glycine 332, and threonine 335 together coordinate ADP-D-ribose. A Phosphothreonine modification is found at threonine 739. The stretch at 752–768 is an intramembrane region; it reads LWRIILCMLAFPLLFTG. The Cytoplasmic portion of the chain corresponds to 769 to 793; it reads FISFREKRLQALCRLARVRAFFNAP. A helical membrane pass occupies residues 794-814; sequence VVIFYLNILSYFAFLCLFAYV. Residues 815–825 are Extracellular-facing; that stretch reads LMVDFQPSPSW. The chain crosses the membrane as a helical span at residues 826-846; the sequence is CEYLIYLWLFSLVCEETRQLF. Positions 841 and 844 each coordinate Ca(2+). Over 847-865 the chain is Cytoplasmic; it reads YDPDGCGLMKMASLYFSDF. The helical transmembrane segment at 866 to 886 threads the bilayer; that stretch reads WNKLDVGAILLFIAGLTCRLI. Asparagine 867 contacts Ca(2+). At 887 to 894 the chain is on the extracellular side; sequence PATLYPGR. Residues 895–915 form a helical membrane-spanning segment; that stretch reads IILSLDFIMFCLRLMHIFTIS. Over 916–927 the chain is Cytoplasmic; sequence KTLGPKIIIVKR. A helical membrane pass occupies residues 928 to 948; that stretch reads MMKDVFFFLFLLAVWVVSFGV. Over 949 to 968 the chain is Extracellular; that stretch reads AKQAILIHNESRVDWIFRGV. Residues 969–983 constitute an intramembrane region (pore-forming); the sequence is IYHSYLTIFGQIPTY. Residues 977 to 980 carry the Selectivity filter motif; the sequence is FGQI. Topologically, residues 984–1020 are extracellular; that stretch reads IDGVNFSMDQCSPNGTDPYKPKCPESDWTGQAPAFPE. A disulfide bridge links cysteine 994 with cysteine 1006. The helical transmembrane segment at 1021 to 1042 threads the bilayer; the sequence is WLTVTLLCLYLLFANILLLNLL. At 1043 to 1077 the chain is on the cytoplasmic side; sequence IAMFNYTFQEVQEHTDQIWKFQRHDLIEEYHGRPP. Ca(2+) is bound at residue glutamate 1071. An intramembrane segment occupies 1078-1096; sequence APPPLILLSHLQLLIKRIV. At 1097 to 1507 the chain is on the cytoplasmic side; it reads LKIPAKRHKQ…KVASLFGAHF (411 aa). Residues 1351 to 1502 enclose the Nudix hydrolase domain; that stretch reads RWKRNQGGGI…KKILQKVASL (152 aa). Serine 1379 is a binding site for ADP-D-ribose. The Nudix box signature appears at 1387 to 1408; sequence GSREPGKMLPRKLKQVLQQEYW. ADP-D-ribose contacts are provided by aspartate 1428, arginine 1430, tyrosine 1489, and asparagine 1491.

This sequence belongs to the transient receptor (TC 1.A.4) family. LTrpC subfamily. TRPM2 sub-subfamily. In terms of assembly, homotetramer. In terms of processing, phosphorylation of TRPM2 at Thr-739 by protein kinase C (PKC) counteracts the effect of cytosolic Ca(2+) and elevates the temperature threshold. Detected in pancreas beta-cells. Detected in fetal brain cortex neurons (at protein level).

The protein localises to the cell membrane. The protein resides in the perikaryon. It is found in the cell projection. Its subcellular location is the cytoplasmic vesicle. It localises to the lysosome. The catalysed reaction is Ca(2+)(in) = Ca(2+)(out). It catalyses the reaction Na(+)(in) = Na(+)(out). Its activity is regulated as follows. Activated by intracellular ADP-ribose, beta-NAD (NAD(+)) and similar compounds, and by oxidative stress caused by reactive oxygen or nitrogen species. Ca(2+) and PI(4,5)P2 are required for channel opening by ADP-ribose. Activation by ADP-ribose and beta-NAD is strongly increased by moderate heat (35 to 40 degrees Celsius). Likewise, reactive oxygen species lower the threshold for activation by moderate heat (37 degrees Celsius). Activated by moderate heat (35 to 40 degrees Celsius). Inactivated by exposure to extracellular pH between 4.0 and 6.5; irreversibly inactivated when open channels are exposed to extracellular pH between 4.0 and 6.5, while pre-exposure of closed channels to extracellular pH 5.5 gives rise to currents that rapidly inactivate, but protects against irreversible inactivation. Inactivated by intracellular ATP. Activated by arachidonic acid. Inhibited by 2-aminoethyl diphenylborinate (2-APB). Nonselective, voltage-independent cation channel that mediates Na(+) and Ca(2+) influx, leading to increased cytoplasmic Ca(2+) levels. Functions as a ligand-gated ion channel gated by intracellular adenosine diphosphate ribose (ADP-ribose), Ca(2+), warm temperature, and oxidative stress. The precise physiological activators are under debate; the true, physiological activators may be ADP-ribose and ADP-ribose-2'-phosphate. Binding of ADP-ribose to the cytoplasmic Nudix domain causes a conformation change; the channel is primed but still requires Ca(2+) binding to trigger channel opening. Extracellular Ca(2+) passes through the channel and increases channel activity. Also contributes to Ca(2+) release from intracellular stores in response to ADP-ribose. Plays a role in numerous processes that involve signaling via intracellular Ca(2+) levels. Besides, mediates the release of lysosomal Zn(2+) stores in response to reactive oxygen species, leading to increased cytosolic Zn(2+) levels. Plays a role in insulin secretion, a process that requires increased cytoplasmic Ca(2+) levels. Required for normal IFNG and cytokine secretion and normal innate immune immunity in response to bacterial infection. Required for normal phagocytosis and cytokine release by macrophages exposed to zymosan (in vitro). Plays a role in dendritic cell differentiation and maturation, and in dendritic cell chemotaxis via its role in regulating cytoplasmic Ca(2+) levels. Plays a role in the regulation of the reorganization of the actin cytoskeleton and filopodia formation in response to reactive oxygen species via its function in increasing cytoplasmic Ca(2+) and Zn(2+) levels. Confers susceptibility to cell death following oxidative stress. The protein is Transient receptor potential cation channel subfamily M member 2 of Rattus norvegicus (Rat).